Consider the following 718-residue polypeptide: Putative methyltransferase NSUN7 (718 aa).

Cys439 (nucleophile) is an active-site residue. Disordered regions lie at residues 536–557 (GKSSKREKKKKKSKTSLTKGAT), 578–616 (ANLSETVTKPPLPQKNTAQVGASSQTRKPNKLAPHPAVP), and 694–718 (SLSRKEEKPKDDTPSSLLRPPRRWL). Positions 538-549 (SSKREKKKKKSK) are enriched in basic residues. Positions 591–604 (QKNTAQVGASSQTR) are enriched in polar residues. The segment covering 696–706 (SRKEEKPKDDT) has biased composition (basic and acidic residues).

It belongs to the class I-like SAM-binding methyltransferase superfamily. RsmB/NOP family.

May have S-adenosyl-L-methionine-dependent methyl-transferase activity. The chain is Putative methyltransferase NSUN7 (NSUN7) from Homo sapiens (Human).